The sequence spans 447 residues: MSPALFLCQRCKEPLKLLQQQGGPLEVQHHANTPTEIPVSAESQVRTSGRPHSDGGRVSQGSALCTFTLLTSGGPDSEGGTTSQGNACCTFTLLGESASMRTMNTIQNTVLETFEILSDQKVVDHPLCVDCTDHLLMQLDDQLALLASDNQKYKSFQDRELLVSEEEREALHAELCAELSSLEQEEARLTQELEDLDGHHARVAAELRAAQAESKELYKQHEQHRVEYSVFKMEQLELMDQLSSVENQLTYALSQQYRLRQTNIFNATFTISDEGPLGVINNFRLGCLPGVRVGWTEISSAWGQTVLLLFSLSKIAGLQFQRYQLVPFGDHSYLKSLTGDGVLPLFSDGSHSVFLNNKFDCGMKAFLDCLQQFVEEIERDERCPCLPYRIHVKEGLMEDVWDSGECCSIRTHLNTEEEWSRALKFMLSDLKLILAWASLRFSRVQRP.

A coiled-coil region spans residues 169-228 (EALHAELCAELSSLEQEEARLTQELEDLDGHHARVAAELRAAQAESKELYKQHEQHRVEY). Residues 186–256 (EARLTQELED…NQLTYALSQQ (71 aa)) form a required for homodimer formation region.

The protein belongs to the beclin family. As to quaternary structure, homodimer (via coiled-coil domain). Interacts (via coiled-coil domain) with ATG14 (via coiled-coil domain); this interaction is tighter than BECN2 self-association. Interacts with AMBRA1, UVRAG and PIK3C3/VPS34; these interactions are not disrupted by starvation. Does not interact with RUBCN. Interacts (via N-terminus) with GPRASP1/GASP1; the interaction is direct. In terms of tissue distribution, expressed in brain, skeletal muscle, placenta, thymus and uterus. Expressed at a lower level in liver, testis, stomach, and 17-day-old embryos.

The protein localises to the cytoplasm. Involved in 2 distinct lysosomal degradation pathways: acts as a regulator of autophagy and as a regulator of G-protein coupled receptors turnover. Regulates degradation in lysosomes of a variety of G-protein coupled receptors via its interaction with GPRASP1/GASP1. This Mus musculus (Mouse) protein is Beclin-2.